We begin with the raw amino-acid sequence, 85 residues long: Large ribosomal subunit protein bL27 (85 aa).

The protein belongs to the bacterial ribosomal protein bL27 family.

The protein is Large ribosomal subunit protein bL27 of Campylobacter hominis (strain ATCC BAA-381 / DSM 21671 / CCUG 45161 / LMG 19568 / NCTC 13146 / CH001A).